The primary structure comprises 147 residues: Hemoglobin subunit beta (147 aa).

Residues 3 to 147 (EWTDSERAII…VVSALGREYH (145 aa)) enclose the Globin domain. Heme b-binding residues include histidine 64 and histidine 93.

Belongs to the globin family. In terms of assembly, heterotetramer of two alpha chains and two beta chains. Red blood cells.

In terms of biological role, involved in oxygen transport from gills to the various peripheral tissues. This chain is Hemoglobin subunit beta (hbb), found in Gadus morhua (Atlantic cod).